A 477-amino-acid polypeptide reads, in one-letter code: UDP-N-acetylglucosamine pyrophosphorylase (477 aa).

The short motif at 109–112 (MAGG) is the Substrate binding element. UTP is bound by residues 109–112 (MAGG), Lys123, and Gln194. Position 218 is a phosphoserine (Ser218). Gly221 contributes to the UTP binding site. Substrate is bound at residue Asn222. UTP is bound at residue Asp252. A Substrate binding motif is present at residues 302–303 (EY). Lys377 lines the UTP pocket. Lys409 is a binding site for substrate. A Phosphoserine modification is found at Ser461.

It belongs to the UDPGP type 1 family.

The protein resides in the cytoplasm. It catalyses the reaction N-acetyl-alpha-D-glucosamine 1-phosphate + UTP + H(+) = UDP-N-acetyl-alpha-D-glucosamine + diphosphate. It functions in the pathway nucleotide-sugar biosynthesis; UDP-N-acetyl-alpha-D-glucosamine biosynthesis; UDP-N-acetyl-alpha-D-glucosamine from N-acetyl-alpha-D-glucosamine 1-phosphate: step 1/1. Functionally, UDP-N-acetylglucosamine pyrophosphorylase that utilizes N-acetylglucosamine-1-phosphate as substrate. Together with AGM1, is involved in the production of UDP-N-acetylglucosamine from N-acetylglucosamine-6-phosphate. The polypeptide is UDP-N-acetylglucosamine pyrophosphorylase (QRI1) (Saccharomyces cerevisiae (strain ATCC 204508 / S288c) (Baker's yeast)).